Reading from the N-terminus, the 212-residue chain is dITP/XTP pyrophosphatase (212 aa).

7–12 (SRNKKK) is a binding site for substrate. Aspartate 72 serves as the catalytic Proton acceptor. A Mg(2+)-binding site is contributed by aspartate 72. Residues serine 73, 163–166 (FGYD), lysine 187, and 192–193 (HR) each bind substrate. A disordered region spans residues 164 to 194 (GYDPLFEPAEAPGQSSAELTPERKDELSHRG). The segment covering 183–192 (TPERKDELSH) has biased composition (basic and acidic residues).

The protein belongs to the HAM1 NTPase family. In terms of assembly, homodimer. The cofactor is Mg(2+).

The catalysed reaction is XTP + H2O = XMP + diphosphate + H(+). It carries out the reaction dITP + H2O = dIMP + diphosphate + H(+). The enzyme catalyses ITP + H2O = IMP + diphosphate + H(+). Its function is as follows. Pyrophosphatase that catalyzes the hydrolysis of nucleoside triphosphates to their monophosphate derivatives, with a high preference for the non-canonical purine nucleotides XTP (xanthosine triphosphate), dITP (deoxyinosine triphosphate) and ITP. Seems to function as a house-cleaning enzyme that removes non-canonical purine nucleotides from the nucleotide pool, thus preventing their incorporation into DNA/RNA and avoiding chromosomal lesions. The sequence is that of dITP/XTP pyrophosphatase from Corynebacterium urealyticum (strain ATCC 43042 / DSM 7109).